A 1043-amino-acid polypeptide reads, in one-letter code: Sarcoplasmic/endoplasmic reticulum calcium ATPase 2 (1043 aa).

At Met-1–Thr-48 the chain is on the cytoplasmic side. Position 38 is a phosphoserine (Ser-38). The chain crosses the membrane as a helical span at residues Leu-49–Ala-69. Residues Cys-70–Val-89 lie on the Lumenal side of the membrane. Residues Glu-90 to Arg-110 traverse the membrane as a helical segment. Residues Asn-111 to Leu-253 lie on the Cytoplasmic side of the membrane. Residues Asp-254 to Ile-273 traverse the membrane as a helical segment. Over Ile-274–Tyr-295 the chain is Lumenal. 3'-nitrotyrosine occurs at positions 294 and 295. A helical membrane pass occupies residues Phe-296–Ala-313. 4 residues coordinate Ca(2+): Val-304, Ala-305, Ile-307, and Glu-309. At Val-314–Met-756 the chain is on the cytoplasmic side. Asp-351 (4-aspartylphosphate intermediate) is an active-site residue. Mg(2+) contacts are provided by Asp-351 and Thr-353. ATP is bound at residue Thr-353. Thr-441 carries the post-translational modification Phosphothreonine. Glu-442, Arg-489, and Lys-514 together coordinate ATP. Ser-531 carries the post-translational modification Phosphoserine. Arg-559 serves as a coordination point for ATP. The tract at residues Met-575–Gly-594 is interaction with HAX1. Ser-580 bears the Phosphoserine mark. ATP contacts are provided by Thr-624, Gly-625, and Asp-626. Residues Ser-661 and Ser-663 each carry the phosphoserine modification. ATP-binding residues include Arg-677 and Lys-683. Mg(2+) is bound at residue Asp-702. An ATP-binding site is contributed by Asn-705. The chain crosses the membrane as a helical span at residues Lys-757 to Leu-776. The Ca(2+) site is built by Asn-767 and Glu-770. The Lumenal portion of the chain corresponds to Thr-777 to Leu-786. Residues Ile-787–Gly-807 form a helical membrane-spanning segment. Residues Ile-787–Gly-807 form an interaction with PLN region. The interaction with TMEM64 and PDIA3 stretch occupies residues Pro-788–Ser-1043. 3 residues coordinate Ca(2+): Asn-795, Thr-798, and Asp-799. Topologically, residues Phe-808–Leu-827 are cytoplasmic. Residues Ile-828 to Ala-850 traverse the membrane as a helical segment. The Lumenal portion of the chain corresponds to Ala-851 to Met-896. A disulfide bridge connects residues Cys-875 and Cys-887. Residues Thr-897–Ser-916 traverse the membrane as a helical segment. Glu-907 is a binding site for Ca(2+). The Cytoplasmic segment spans residues Glu-917–Asn-929. Residues Ile-930–Tyr-948 form a helical membrane-spanning segment. Positions Trp-931–Leu-942 are interaction with PLN. The Lumenal segment spans residues Val-949 to Leu-963. A helical transmembrane segment spans residues Thr-964–Lys-984. Over Phe-985–Ser-1043 the chain is Cytoplasmic.

It belongs to the cation transport ATPase (P-type) (TC 3.A.3) family. Type IIA subfamily. Interacts with sarcolipin (SLN); the interaction inhibits ATP2A2 Ca(2+) affinity. Interacts with phospholamban (PLN); the interaction inhibits ATP2A2 Ca(2+) affinity. Interacts with myoregulin (MRLN). Interacts with ARLN and ERLN; the interactions inhibit ATP2A2 Ca(2+) affinity. Interacts with STRIT1/DWORF; the interaction results in activation of ATP2A2. Interacts with the monomeric forms of SLN, PLN, ARLN, ERLN and STRI1/DWORF. Interacts with HAX1. Interacts with S100A8 and S100A9. Interacts with SLC35G1 and STIM1. Interacts with TMEM203. Interacts with TMEM64 and PDIA3. Interacts with TMX1. Interacts with TMX2. Interacts with VMP1; VMP1 competes with PLN and SLN to prevent them from forming an inhibitory complex with ATP2A2. Interacts with ULK1. Interacts with S100A1 in a Ca(2+)-dependent manner. Interacts with TUNAR. Interacts with FLVCR2; this interaction occurs in the absence of heme and promotes ATP2A2 proteasomal degradation; this complex is dissociated upon heme binding. Interacts with FNIP1. As to quaternary structure, interacts with TRAM2 (via C-terminus). Mg(2+) is required as a cofactor. Nitrated under oxidative stress. Nitration on the two tyrosine residues inhibits catalytic activity. In terms of processing, serotonylated on Gln residues by TGM2 in response to hypoxia, leading to its inactivation. Isoform 2 is highly expressed in heart and slow twitch skeletal muscle. Isoform 1 is widely expressed.

It localises to the endoplasmic reticulum membrane. The protein localises to the sarcoplasmic reticulum membrane. The catalysed reaction is Ca(2+)(in) + ATP + H2O = Ca(2+)(out) + ADP + phosphate + H(+). Its activity is regulated as follows. Has different conformational states with differential Ca2+ affinity. The E1 conformational state (active form) shows high Ca(2+) affinity, while the E2 state exhibits low Ca(2+) affinity. Binding of ATP allosterically increases its affinity for subsequent binding of Ca2+. Reversibly inhibited by phospholamban (PLN) at low calcium concentrations. PLN inhibits ATP2A2 Ca(2+) affinity by disrupting its allosteric activation by ATP. Inhibited by sarcolipin (SLN) and myoregulin (MRLN). The inhibition is blocked by VMP1. Enhanced by STRIT1/DWORF; STRIT1 increases activity by displacing sarcolipin (SLN), phospholamban (PLN) and myoregulin (MRLN). Stabilizes SERCA2 in its E2 state. Its function is as follows. This magnesium-dependent enzyme catalyzes the hydrolysis of ATP coupled with the translocation of calcium from the cytosol to the sarcoplasmic reticulum lumen. Involved in autophagy in response to starvation. Upon interaction with VMP1 and activation, controls ER-isolation membrane contacts for autophagosome formation. Also modulates ER contacts with lipid droplets, mitochondria and endosomes. In coordination with FLVCR2 mediates heme-stimulated switching from mitochondrial ATP synthesis to thermogenesis. Involved in the regulation of the contraction/relaxation cycle. Acts as a regulator of TNFSF11-mediated Ca(2+) signaling pathways via its interaction with TMEM64 which is critical for the TNFSF11-induced CREB1 activation and mitochondrial ROS generation necessary for proper osteoclast generation. Association between TMEM64 and SERCA2 in the ER leads to cytosolic Ca(2+) spiking for activation of NFATC1 and production of mitochondrial ROS, thereby triggering Ca(2+) signaling cascades that promote osteoclast differentiation and activation. The chain is Sarcoplasmic/endoplasmic reticulum calcium ATPase 2 (Atp2a2) from Rattus norvegicus (Rat).